We begin with the raw amino-acid sequence, 131 residues long: Small ribosomal subunit protein uS9 (131 aa).

It belongs to the universal ribosomal protein uS9 family.

The chain is Small ribosomal subunit protein uS9 from Mycoplasmopsis synoviae (strain 53) (Mycoplasma synoviae).